The chain runs to 166 residues: Phosphopantetheine adenylyltransferase (166 aa).

Ser8 serves as a coordination point for substrate. ATP-binding positions include 8–9 (SF) and His16. Residues Lys40, Thr72, and Arg86 each contribute to the substrate site. ATP-binding positions include 87–89 (GLR), Glu97, and 122–128 (YSFLSSS).

This sequence belongs to the bacterial CoaD family. As to quaternary structure, homohexamer. It depends on Mg(2+) as a cofactor.

The protein localises to the cytoplasm. The enzyme catalyses (R)-4'-phosphopantetheine + ATP + H(+) = 3'-dephospho-CoA + diphosphate. It functions in the pathway cofactor biosynthesis; coenzyme A biosynthesis; CoA from (R)-pantothenate: step 4/5. Functionally, reversibly transfers an adenylyl group from ATP to 4'-phosphopantetheine, yielding dephospho-CoA (dPCoA) and pyrophosphate. In Synechococcus elongatus (strain ATCC 33912 / PCC 7942 / FACHB-805) (Anacystis nidulans R2), this protein is Phosphopantetheine adenylyltransferase.